The chain runs to 316 residues: Glutathione synthetase (316 aa).

The 187-residue stretch at 125–311 folds into the ATP-grasp domain; the sequence is KLFTAWFPEL…ITGMLMNAIE (187 aa). 151 to 207 lines the ATP pocket; it reads HQKHGDVIFKPLDGMGGASIFRLKKDDPNVGVIIETLTEHGNRFCMAQNFLPAIKEG. Glu-281 and Asn-283 together coordinate Mg(2+).

It belongs to the prokaryotic GSH synthase family. Requires Mg(2+) as cofactor. The cofactor is Mn(2+).

The catalysed reaction is gamma-L-glutamyl-L-cysteine + glycine + ATP = glutathione + ADP + phosphate + H(+). The protein operates within sulfur metabolism; glutathione biosynthesis; glutathione from L-cysteine and L-glutamate: step 2/2. This is Glutathione synthetase from Photorhabdus laumondii subsp. laumondii (strain DSM 15139 / CIP 105565 / TT01) (Photorhabdus luminescens subsp. laumondii).